A 139-amino-acid chain; its full sequence is D-ribose pyranase (139 aa).

The active-site Proton donor is His-20. Substrate-binding positions include Asp-28, His-106, and 128 to 130 (YAN).

The protein belongs to the RbsD / FucU family. RbsD subfamily. In terms of assembly, homodecamer.

The protein localises to the cytoplasm. The enzyme catalyses beta-D-ribopyranose = beta-D-ribofuranose. Its pathway is carbohydrate metabolism; D-ribose degradation; D-ribose 5-phosphate from beta-D-ribopyranose: step 1/2. Its function is as follows. Catalyzes the interconversion of beta-pyran and beta-furan forms of D-ribose. The protein is D-ribose pyranase of Salmonella typhi.